A 913-amino-acid chain; its full sequence is WD repeat-containing protein 44 (913 aa).

Residues 1-14 are compositionally biased toward acidic residues; that stretch reads MASESDTEEFYDAP. A disordered region spans residues 1–24; the sequence is MASESDTEEFYDAPEDVHLGGGYP. N-acetylalanine is present on A2. The binding activity stretch occupies residues 2–170; the sequence is ASESDTEEFY…SSTEQLNVLE (169 aa). A Phosphoserine modification is found at S3. The FFAT-like motif motif lies at 9–15; it reads EFYDAPE. The residue at position 11 (Y11) is a Phosphotyrosine. S27, S50, S66, S71, S81, S96, and S126 each carry phosphoserine. Positions 119–184 form a coiled coil; sequence EESQKAESQN…VLNKEAVEVK (66 aa). Phosphothreonine is present on residues T158 and T219. A disordered region spans residues 205–348; sequence AVEEVAPAKP…RPRSNSGREL (144 aa). The segment at 211–257 is important for interaction with ARHGAP26 AND ARHGAP10; the sequence is PAKPPRHLTPEPDIVASTKKPVPARPPPPTNFPPPRPPPPSRPAPPP. The segment covering 233-256 has biased composition (pro residues); sequence PARPPPPTNFPPPRPPPPSRPAPP. S262 carries the post-translational modification Phosphoserine. The span at 262 to 278 shows a compositional bias: basic and acidic residues; sequence SELEFETLKTPDIDVPK. T271 is modified (phosphothreonine). The span at 280–311 shows a compositional bias: polar residues; that stretch reads NITSDSLLTASMASESTVKDSQPSLDLASATS. An important for interaction with RAB11A region spans residues 334-347; it reads VMGPQRPRSNSGRE. Phosphoserine; by PKB/AKT1 occurs at positions 342 and 344. Position 349 is a phosphothreonine (T349). Disordered stretches follow at residues 397-424 and 459-480; these read SNDA…LKQK and DEVF…MPYT. Phosphoserine is present on residues S403, S470, S471, and S472. A compositionally biased stretch (acidic residues) spans 467–476; sequence DDPSSSDDEG. Y479 carries the phosphotyrosine modification. One copy of the WD 1 repeat lies at 509 to 548; that stretch reads EHMGAVWTMKFSHCGRLLASAGQDNVVRIWALKNAFDYFN. Residues 557-593 are disordered; the sequence is EGRVSPSPSQESLSSSKSDTDTGVCSGTDEDPDDKNA. 2 positions are modified to phosphoserine: S561 and S565. Residues 561–573 are compositionally biased toward low complexity; sequence SPSPSQESLSSSK. WD repeat units lie at residues 605–643, 645–685, 690–729, 740–779, 784–823, and 876–913; these read GHTA…CLCC, QHID…VALW, GQTK…YHTQ, KVGR…LSMK, VNSS…SKFT, and VLDA…KNVS.

As to quaternary structure, interacts with the GTP-bound form of RAB11A and RAB11B. Interacts with GRAF1/ARHGAP26 or GRAF2/ARHGAP10; the interaction connects the endoplasmic reticulum (ER) with the endosomal tubule. Interacts (via FFAT-like motif) with VAPA (via MSP domain) or VAPB (via MSP domain); the interaction connects the ER with the endosomal tubule. Does not bind to RAB7, RAB10, RAB14, RAB35 and RAB8A. Phosphorylated by ATK1; the phosphorylation stabilizes its interaction with RAB11A and RAB11B.

It is found in the cytoplasm. Its subcellular location is the cytosol. The protein resides in the perinuclear region. The protein localises to the endosome membrane. It localises to the golgi apparatus. It is found in the trans-Golgi network. Its function is as follows. Downstream effector for Rab11 which regulates Rab11 intracellular membrane trafficking functions such as endocytic recycling, intracellular ciliogenesis and protein export. ATK1-mediated phosphorylation of WDR44 induces binding to Rab11 which activates endocytic recycling of transferrin receptor back to the plasma membrane. When bound to Rab11, prevents the formation of the ciliogenic Rab11-Rabin8/RAB3IP-RAB11FIP3 complex, therefore inhibiting preciliary trafficking and ciliogenesis. Participates in neo-synthesized protein export by connecting the endoplasmic reticulum (ER) with the endosomal tubule via direct interactions with the integral ER proteins VAPA or VAPB and the endosomal protein GRAFs (GRAF1/ARHGAP26 or GRAF2/ARHGAP10), which facilitates the transfer of proteins such as E-cadherin, MPP14 and CFTR into a Rab8-Rab10-Rab11-dependent export route. This chain is WD repeat-containing protein 44, found in Homo sapiens (Human).